Consider the following 370-residue polypeptide: Ferrochelatase (370 aa).

Fe cation is bound by residues His210 and Glu291.

Belongs to the ferrochelatase family.

The protein localises to the cytoplasm. The enzyme catalyses heme b + 2 H(+) = protoporphyrin IX + Fe(2+). Its pathway is porphyrin-containing compound metabolism; protoheme biosynthesis; protoheme from protoporphyrin-IX: step 1/1. Its function is as follows. Catalyzes the ferrous insertion into protoporphyrin IX. The polypeptide is Ferrochelatase (Marinobacter nauticus (strain ATCC 700491 / DSM 11845 / VT8) (Marinobacter aquaeolei)).